A 278-amino-acid chain; its full sequence is Probable CCR4-associated factor 1 homolog 5 (278 aa).

4 residues coordinate a divalent metal cation: Asp-30, Glu-32, Asp-145, and Asp-217.

It belongs to the CAF1 family. Component of the CCR4-NOT complex, at least composed of CRR4 and CAF1 proteins. Requires a divalent metal cation as cofactor.

It localises to the nucleus. The protein resides in the cytoplasm. It carries out the reaction Exonucleolytic cleavage of poly(A) to 5'-AMP.. Functionally, ubiquitous transcription factor required for a diverse set of processes. It is a component of the CCR4 complex involved in the control of gene expression. The sequence is that of Probable CCR4-associated factor 1 homolog 5 (CAF1-5) from Arabidopsis thaliana (Mouse-ear cress).